Here is a 545-residue protein sequence, read N- to C-terminus: Membrane protein insertase YidC (545 aa).

A run of 4 helical transmembrane segments spans residues 350 to 370 (IIGNWGWAIVVLTIIVKAVLY), 424 to 444 (LPMLLQIPVFIGLYWALFASV), 461 to 481 (ADPYYILPIIMAATMFAQTYL), and 498 to 518 (PLVFSVMFFFFPAGLVLYWVV).

Belongs to the OXA1/ALB3/YidC family. Type 1 subfamily. In terms of assembly, interacts with the Sec translocase complex via SecD. Specifically interacts with transmembrane segments of nascent integral membrane proteins during membrane integration.

Its subcellular location is the cell inner membrane. Required for the insertion and/or proper folding and/or complex formation of integral membrane proteins into the membrane. Involved in integration of membrane proteins that insert both dependently and independently of the Sec translocase complex, as well as at least some lipoproteins. Aids folding of multispanning membrane proteins. This is Membrane protein insertase YidC from Neisseria gonorrhoeae (strain NCCP11945).